The sequence spans 568 residues: Vitamin H transporter 1 (568 aa).

A run of 12 helical transmembrane segments spans residues 85–105, 123–143, 158–178, 187–207, 222–242, 257–277, 345–365, 384–404, 411–431, 439–459, 470–490, and 508–528; these read IIPCLWILYFLSCCLRFTVSL, GYSAHYLALGLALFYVGYIIF, IWVSRIQLTIGVVGACHAVLG, YVALRFFLGVAESGLWPGLAY, IGWYYTAAQIAAAAVSLVSAG, WMFLIWGVVAIAQALSIPWWL, VWPFILMYFGIVGVGNGIFNY, LLNAPIWLADALGIVTVMPLY, FSFFTGSCLIIIAGLAVANYA, GGLLMIGFGLGPTVPICMAWC, VGVASSLALVTGLGNLGSVVT, and NDVCIALIGVSIIACGIEFLL. Residues 547–568 form a disordered region; it reads VEDEQEMTDIKPALPSSQQADA.

It belongs to the major facilitator superfamily. Allantoate permease family.

It is found in the membrane. Involved in uptake of biotin and desthiobiotin with the concomitant entry of protons. The chain is Vitamin H transporter 1 (vht1) from Schizosaccharomyces pombe (strain 972 / ATCC 24843) (Fission yeast).